We begin with the raw amino-acid sequence, 199 residues long: ATP-dependent Clp protease proteolytic subunit (199 aa).

The active-site Nucleophile is the S97. H122 is an active-site residue.

The protein belongs to the peptidase S14 family. As to quaternary structure, fourteen ClpP subunits assemble into 2 heptameric rings which stack back to back to give a disk-like structure with a central cavity, resembling the structure of eukaryotic proteasomes.

It localises to the cytoplasm. It carries out the reaction Hydrolysis of proteins to small peptides in the presence of ATP and magnesium. alpha-casein is the usual test substrate. In the absence of ATP, only oligopeptides shorter than five residues are hydrolyzed (such as succinyl-Leu-Tyr-|-NHMec, and Leu-Tyr-Leu-|-Tyr-Trp, in which cleavage of the -Tyr-|-Leu- and -Tyr-|-Trp bonds also occurs).. In terms of biological role, cleaves peptides in various proteins in a process that requires ATP hydrolysis. Has a chymotrypsin-like activity. Plays a major role in the degradation of misfolded proteins. This is ATP-dependent Clp protease proteolytic subunit from Geotalea daltonii (strain DSM 22248 / JCM 15807 / FRC-32) (Geobacter daltonii).